A 950-amino-acid polypeptide reads, in one-letter code: Protocadherin alpha-6 (950 aa).

The signal sequence occupies residues 1–29; the sequence is MVFTPEDRLGKQCLLLPLLLLAAWKVGSG. Residues 30-697 lie on the Extracellular side of the membrane; sequence QLHYSVPEEA…GPEAALVDVN (668 aa). 6 consecutive Cadherin domains span residues 34 to 133, 157 to 242, 243 to 350, 351 to 455, 456 to 565, and 581 to 678; these read SVPE…PPLF, ASDA…APNF, EQSE…VPEI, ALTS…APAF, AQPE…APAL, and VPRS…APKA. Asn-257, Asn-265, Asn-386, and Asn-548 each carry an N-linked (GlcNAc...) asparagine glycan. The chain crosses the membrane as a helical span at residues 698–718; that stretch reads VYLIIAICAVSSLLVLTLLLY. Topologically, residues 719–950 are cytoplasmic; the sequence is TALRCSAPST…GNSTTDNSDQ (232 aa). PXXP repeat units follow at residues 799–802, 832–835, 873–876, and 891–894; these read PRQP, PGGP, PGNP, and PGSP. Residues 799–894 form a 4 X 4 AA repeats of P-X-X-P region; sequence PRQPNPDWRY…PDKFIIPGSP (96 aa). The interval 830 to 889 is disordered; that stretch reads AGPGGPDQQWPTVSSATPEPEAGEVSPPVGAGVNSNSWTFKYGPGNPKQSGPGELPDKFI. The segment at 901-950 is disordered; it reads QEPANSQIDKSDFITFGKKEETKKKKKKKKGNKTQEKKEKGNSTTDNSDQ. Residues 909-923 show a composition bias toward basic and acidic residues; sequence DKSDFITFGKKEETK.

The protein resides in the cell membrane. In terms of biological role, potential calcium-dependent cell-adhesion protein. May be involved in the establishment and maintenance of specific neuronal connections in the brain. The sequence is that of Protocadherin alpha-6 (PCDHA6) from Pan troglodytes (Chimpanzee).